The chain runs to 397 residues: Elongation factor Tu 1 (397 aa).

The tr-type G domain maps to 10–207 (KPHVNVGTIG…TLDSYIPEPV (198 aa)). Residues 19-26 (GHVDHGKT) form a G1 region. 19–26 (GHVDHGKT) contacts GTP. Position 26 (threonine 26) interacts with Mg(2+). Residues 60 to 64 (GITIN) form a G2 region. Positions 81-84 (DCPG) are G3. GTP-binding positions include 81–85 (DCPGH) and 136–139 (NKAD). The G4 stretch occupies residues 136-139 (NKAD). Residues 174–176 (SAL) form a G5 region.

This sequence belongs to the TRAFAC class translation factor GTPase superfamily. Classic translation factor GTPase family. EF-Tu/EF-1A subfamily. Monomer.

Its subcellular location is the cytoplasm. The catalysed reaction is GTP + H2O = GDP + phosphate + H(+). Its function is as follows. GTP hydrolase that promotes the GTP-dependent binding of aminoacyl-tRNA to the A-site of ribosomes during protein biosynthesis. This chain is Elongation factor Tu 1, found in Stutzerimonas stutzeri (strain A1501) (Pseudomonas stutzeri).